A 307-amino-acid chain; its full sequence is N-acetylmuramic acid 6-phosphate etherase (307 aa).

The region spanning 60–223 (AAQAIARGGR…STGAMVRIGK (164 aa)) is the SIS domain. Residue E88 is the Proton donor of the active site. E119 is a catalytic residue.

The protein belongs to the GCKR-like family. MurNAc-6-P etherase subfamily. In terms of assembly, homodimer.

It carries out the reaction N-acetyl-D-muramate 6-phosphate + H2O = N-acetyl-D-glucosamine 6-phosphate + (R)-lactate. The protein operates within amino-sugar metabolism; N-acetylmuramate degradation. Specifically catalyzes the cleavage of the D-lactyl ether substituent of MurNAc 6-phosphate, producing GlcNAc 6-phosphate and D-lactate. The sequence is that of N-acetylmuramic acid 6-phosphate etherase from Synechococcus elongatus (strain ATCC 33912 / PCC 7942 / FACHB-805) (Anacystis nidulans R2).